The following is a 182-amino-acid chain: Prorelaxin (182 aa).

The first 24 residues, 1–24 (MPRLFSYLLGVWLLLSQLPREIPG), serve as a signal peptide directing secretion. Pyrrolidone carboxylic acid is present on Gln-25. 3 disulfide bridges follow: Cys-34–Cys-169, Cys-46–Cys-182, and Cys-168–Cys-173. Residues 57-154 (SLEEPQLETG…LKNLGLDKHS (98 aa)) constitute a propeptide, connecting peptide. Positions 159–160 (LF) are excised as a propeptide.

This sequence belongs to the insulin family. In terms of assembly, heterodimer of a B chain and an A chain linked by two disulfide bonds.

Its subcellular location is the secreted. Its function is as follows. Relaxin is an ovarian hormone that acts with estrogen to produce dilatation of the birth canal in many mammals. This chain is Prorelaxin (RLN), found in Sus scrofa (Pig).